A 152-amino-acid polypeptide reads, in one-letter code: Large ribosomal subunit protein eL32 (152 aa).

Belongs to the eukaryotic ribosomal protein eL32 family.

In Pyrobaculum aerophilum (strain ATCC 51768 / DSM 7523 / JCM 9630 / CIP 104966 / NBRC 100827 / IM2), this protein is Large ribosomal subunit protein eL32 (rpl32e).